Here is a 91-residue protein sequence, read N- to C-terminus: Aspartyl/glutamyl-tRNA(Asn/Gln) amidotransferase subunit C (91 aa).

The tract at residues 68-91 (LDQDDALANAPETEDGRFKGPNVS) is disordered.

It belongs to the GatC family. As to quaternary structure, heterotrimer of A, B and C subunits.

The catalysed reaction is L-glutamyl-tRNA(Gln) + L-glutamine + ATP + H2O = L-glutaminyl-tRNA(Gln) + L-glutamate + ADP + phosphate + H(+). The enzyme catalyses L-aspartyl-tRNA(Asn) + L-glutamine + ATP + H2O = L-asparaginyl-tRNA(Asn) + L-glutamate + ADP + phosphate + 2 H(+). Functionally, allows the formation of correctly charged Asn-tRNA(Asn) or Gln-tRNA(Gln) through the transamidation of misacylated Asp-tRNA(Asn) or Glu-tRNA(Gln) in organisms which lack either or both of asparaginyl-tRNA or glutaminyl-tRNA synthetases. The reaction takes place in the presence of glutamine and ATP through an activated phospho-Asp-tRNA(Asn) or phospho-Glu-tRNA(Gln). The protein is Aspartyl/glutamyl-tRNA(Asn/Gln) amidotransferase subunit C of Halobacterium salinarum (strain ATCC 29341 / DSM 671 / R1).